The chain runs to 525 residues: Glutamate synthase large subunit-like protein YerD (525 aa).

Residues 4 to 24 (IIIALIAFIIGIIAIPIVLFA) form a helical membrane-spanning segment.

The protein belongs to the glutamate synthase family.

The protein localises to the cell membrane. In Bacillus subtilis (strain 168), this protein is Glutamate synthase large subunit-like protein YerD (yerD).